Consider the following 503-residue polypeptide: MEDPDILSNFLSITGCDDSSLATTILENNNWDVERSVDFFFTMNDPSNVKPTTSSKKTSSPPTASSSSASSEFDYNEDEFRDPIPQKMDKLVDHYYQPTQRSYQKQTNVFEAFRDFEKERGINQDKATEKQKSLSELFKPPLDILTFGTFDEIKKMAEQKKYFVLVNIQDVQEFDCQKLNRDTWSNKDLKELIGENFVFWQVNSANPEGKWFTQIYPVFKFPYIAIIDPRTGQKLQDMTGFIDAEEMAQYLVTFLSTNSFSGQIDPPPSSSSSGASKKQKKYNTEDEELELAIALSLKQEQERNSKSGSTSPLSQQQQQQQQQNNNNNNNNNSNNNNSTSTTTTTSTTTTKILGTNNKKDEKEDEDDVEEKDEDFEDDDEIEEDNYDDNYYYGETVQKEISEEEQKKVEIKQLVEKIQVTSKIGTEGDCIIQVRCPGGETLKGQFHSHDQIKNIYYYVQVKTGISNFKLFTSFPKLDLSGELMSKTLKELDLAPRAVLNMLQE.

Disordered regions lie at residues 47–80 (SNVK…EDEF), 262–284 (GQID…KYNT), and 299–389 (QEQE…YDDN). The segment covering 50 to 71 (KPTTSSKKTSSPPTASSSSASS) has biased composition (low complexity). One can recognise a UIM domain in the interval 284-303 (TEDEELELAIALSLKQEQER). Low complexity predominate over residues 314 to 350 (SQQQQQQQQQNNNNNNNNNSNNNNSTSTTTTTSTTTT). Positions 362–387 (KEDEDDVEEKDEDFEDDDEIEEDNYD) are enriched in acidic residues. One can recognise a UBX domain in the interval 424 to 500 (GTEGDCIIQV…DLAPRAVLNM (77 aa)).

This chain is UBX domain-containing protein 7 homolog (ubxd7), found in Dictyostelium discoideum (Social amoeba).